The chain runs to 308 residues: MFDPETLRTFISVAETGSFSKAAERLCKTTATTSYRIKLLEENTGVGLFFRTTRSVSLTAAGSHLLSQAKDWLAWLDSMPDELRQVNDGVERQVNIVVNNLLYSPQAVASLLSWLNARYPFTQFHFSRQIYMGVWDSLLYEGFSLAIGVTGTEPLANTFMLDPLGSVQWRFVMSADHPLAHVSGPLTEAQLRRFPAINIEDSARTLTKRVAWRLPGQKEIIVPDMETKIAAHLAGVGIGFVPQPLCQTLIDKNELVSCTIPTMRPPSPLSLAWHKFGGGKAVEDIVKLFTQRQPEIAGFLSIFNTVRC.

Positions 2-59 (FDPETLRTFISVAETGSFSKAAERLCKTTATTSYRIKLLEENTGVGLFFRTTRSVSLT) constitute an HTH lysR-type domain. A DNA-binding region (H-T-H motif) is located at residues 19–38 (FSKAAERLCKTTATTSYRIK).

This sequence belongs to the LysR transcriptional regulatory family.

Functionally, positive regulator essential for the expression of allD operon. Binds to the allD promoter. This is HTH-type transcriptional activator AllS (allS) from Salmonella typhi.